Consider the following 466-residue polypeptide: Polycomb group protein FIE1 (466 aa).

A compositionally biased stretch (basic residues) spans M1–S10. A disordered region spans residues M1–L71. The segment covering S31–S49 has biased composition (low complexity). WD repeat units follow at residues D167 to S209, G212 to V252, G258 to E298, I324 to G361, P374 to I414, and Q421 to V460.

The protein belongs to the WD repeat ESC family. In terms of assembly, interacts with EZ1 and CLF. Component of the polycomb repressive complex 2 (PRC2), which methylates 'Lys-27' residues of histone H3 (H3K27me3), leading to transcriptional repression of the affected target gene. As to expression, expressed specifically in seed endosperm.

In terms of biological role, polycomb group (PcG) protein. PcG proteins act by forming multiprotein complexes, which are required to maintain the transcriptionally repressive state of homeotic genes throughout development. PcG proteins are not required to initiate repression, but to maintain it during later stages of development. They act via the methylation of histones, rendering chromatin heritably changed in its expressibility. Together with EZ1 and CLF forms a complex that is involved in gene transcriptional repression by trimethylation on histone H3 'Lys-27' (H3K27me3) of target genes. Involved in the regulation of embryo and seed endosperm development. FIE1-containing PcG complex in seed endosperm regulates the expression of various transcription factors by trimethylation on histone H3 'Lys-27' (H3K27me3) of target genes. Involved in the overall expression regulation of nutrient metabolism genes, such as prolamin synthesis and seed storage protein synthesis genes. Can regulate valine, leucine and isoleucine metabolism-related genes. This chain is Polycomb group protein FIE1, found in Oryza sativa subsp. japonica (Rice).